Reading from the N-terminus, the 159-residue chain is Ribonuclease P protein component 2 (159 aa).

Belongs to the eukaryotic/archaeal RNase P protein component 2 family. As to quaternary structure, consists of a catalytic RNA component and at least 4-5 protein subunits.

The protein resides in the cytoplasm. The catalysed reaction is Endonucleolytic cleavage of RNA, removing 5'-extranucleotides from tRNA precursor.. Part of ribonuclease P, a protein complex that generates mature tRNA molecules by cleaving their 5'-ends. This Halorubrum lacusprofundi (strain ATCC 49239 / DSM 5036 / JCM 8891 / ACAM 34) protein is Ribonuclease P protein component 2.